The sequence spans 104 residues: Conantokin-P (104 aa).

An N-terminal signal peptide occupies residues 1-26 (MQLYTYLYLLVPLVTFHLILSTGTLA). The propeptide occupies 27 to 80 (HGGTLTERRSTDTTALKPEPVLLQKSDARSTDDNDKDRLTQMKRILKKRGNKAR). The interval 29–87 (GTLTERRSTDTTALKPEPVLLQKSDARSTDDNDKDRLTQMKRILKKRGNKARGEEEHSK) is disordered. Residues 52–66 (SDARSTDDNDKDRLT) are compositionally biased toward basic and acidic residues. 4-carboxyglutamate occurs at positions 83, 84, 90, 94, and 103. Residues Glu90 and Glu94 each contribute to the a divalent metal cation site. Cys91 and Cys104 are disulfide-bonded.

Belongs to the conotoxin B superfamily. Expressed by the venom duct.

The protein resides in the secreted. Functionally, conantokins inhibit N-methyl-D-aspartate (NMDA) receptors. This toxin has the highest potency for the NR2B/GRIN2B subunit, followed by NR2A/GRIN2A, NR2C/GRIN2C, and NR2D/GRIN2D subunits. The protein is Conantokin-P of Conus purpurascens (Purple cone).